Consider the following 683-residue polypeptide: MLACLTRGNLLDVLQEGFNEQQLQAYVAWVNAQLKKRPAVKPVQDLRQDLRDGVILAYLIEIVAGEKLSGVQLSPGNQQEMKNNVEKVLQFVASKKIRMHQTSAKDIVDGNLKSIMRLVLALAAHFKPGSSRTVNQGRDSRAPLQSHRPHCATAVAQGAAAALADVCHDMSRSGRDVFRYRQRNSSMDEEIENPYWSVRALVQQYEGQQRSPSESSCSSLTSPSPIHSAKSESIITQSEEKADFVIIPAEGIENRTEGTDSPLSRDWRPGSPGTYLETSWEEQLLEQQEYLEKEMEEAKKMISGLQALLLNGSLPEDEQERPLALCEPGVNPEEQLIIIQSRLDQSMEENQDLKKELLKCKQEARNLQGIKDALQQRLTQQDTSVLQLKQELLRANMDKDELHNQNVDLQRKLDERNRLLGEYKKELGQKDRLLQQHQAKLEEALRKLSDVSYHQVDLERELEHKDVLLAHCMKREADEATNYNSHNSQSNGFLLPTAGKGATSVSNRGTSDLQLVRDALRSLRNSFSGHDPQHHTIDSLEQGISSLMERLHVMETQKKQERKVRVKSPRTQVGSEYRESWPPNSKLPHSQSSPTVSSTCTKVLYFTDRSLTPFMVNIPKRLEEVTLKDFKAAIDREGNHRYHFKALDPEFGTVKEEIFHDDDAIPGWEGKIVAWVEEDHGEN.

Residue Leu2 is the site of N-myristoyl glycine attachment. Residues 20–127 (EQQLQAYVAW…LVLALAAHFK (108 aa)) form the Calponin-homology (CH) domain. An actin-binding region spans residues 127 to 300 (KPGSSRTVNQ…LEKEMEEAKK (174 aa)). The residue at position 186 (Ser186) is a Phosphoserine. Residues 207 to 235 (GQQRSPSESSCSSLTSPSPIHSAKSESII) are disordered. Low complexity predominate over residues 211-228 (SPSESSCSSLTSPSPIHS). Position 231 is a phosphoserine (Ser231). A coiled-coil region spans residues 279–452 (SWEEQLLEQQ…EALRKLSDVS (174 aa)). Residues 482-492 (NYNSHNSQSNG) show a composition bias toward polar residues. Disordered regions lie at residues 482 to 509 (NYNSHNSQSNGFLLPTAGKGATSVSNRG) and 556 to 594 (TQKKQERKVRVKSPRTQVGSEYRESWPPNSKLPHSQSSP). Residue Ser590 is modified to Phosphoserine. One can recognise a DIX domain in the interval 600–680 (CTKVLYFTDR…KIVAWVEEDH (81 aa)).

It belongs to the DIXDC1 family. In terms of assembly, isoform 1 but not isoform 2 binds filamentous actin. Interacts with the complex composed of DVL2 and Rac. Interacts with AXIN1; competes with MAP3K1. Interacts with MAP3K4 preventing MAP3K4 interaction with AXIN1. Directly interacts (via DIX domain) with DVL2 (via DIX domain). Interacts with gamma-tubulin. Post-translationally, phosphorylated on tyrosine and serine residues. In terms of processing, polyubiquitinated, leading to its proteasomal degradation. WNT3A signaling increases DIXDC1 protein levels by inhibiting its ubiquitination and subsequent degradation. As to expression, ubiquitously expressed with higher expression in cardiac and skeletal muscles.

The protein resides in the cell junction. It is found in the focal adhesion. The protein localises to the cytoplasm. It localises to the cytoskeleton. Its subcellular location is the stress fiber. Positive effector of the Wnt signaling pathway; activates WNT3A signaling via DVL2. Regulates JNK activation by AXIN1 and DVL2. In Homo sapiens (Human), this protein is Dixin (DIXDC1).